Consider the following 346-residue polypeptide: Hydroxymethylglutaryl-CoA synthase (346 aa).

Asp-28 lines the (3S)-3-hydroxy-3-methylglutaryl-CoA pocket. The active-site Proton donor/acceptor is Glu-80. (3S)-3-hydroxy-3-methylglutaryl-CoA contacts are provided by Cys-112 and Thr-153. Cys-112 (acyl-thioester intermediate) is an active-site residue. CoA is bound at residue Arg-199. (3S)-3-hydroxy-3-methylglutaryl-CoA-binding residues include Thr-201 and His-234. His-234 functions as the Proton donor/acceptor in the catalytic mechanism. A CoA-binding site is contributed by Lys-239. (3S)-3-hydroxy-3-methylglutaryl-CoA contacts are provided by Arg-243, Asn-266, and Ser-296.

The protein belongs to the thiolase-like superfamily. Archaeal HMG-CoA synthase family. Interacts with acetoacetyl-CoA thiolase that catalyzes the precedent step in the pathway and with a DUF35 protein. The acetoacetyl-CoA thiolase/HMG-CoA synthase complex channels the intermediate via a fused CoA-binding site, which allows for efficient coupling of the endergonic thiolase reaction with the exergonic HMGCS reaction.

The catalysed reaction is acetoacetyl-CoA + acetyl-CoA + H2O = (3S)-3-hydroxy-3-methylglutaryl-CoA + CoA + H(+). It participates in metabolic intermediate biosynthesis; (R)-mevalonate biosynthesis; (R)-mevalonate from acetyl-CoA: step 2/3. Catalyzes the condensation of acetyl-CoA with acetoacetyl-CoA to form 3-hydroxy-3-methylglutaryl-CoA (HMG-CoA). Functions in the mevalonate (MVA) pathway leading to isopentenyl diphosphate (IPP), a key precursor for the biosynthesis of isoprenoid compounds that are building blocks of archaeal membrane lipids. The sequence is that of Hydroxymethylglutaryl-CoA synthase from Methanosphaera stadtmanae (strain ATCC 43021 / DSM 3091 / JCM 11832 / MCB-3).